Here is a 426-residue protein sequence, read N- to C-terminus: Tubby protein homolog 1 (426 aa).

A required for localization to cilia in AWB sensory neurons region spans residues 16–28 (QRKMLEDKQKQKR). A disordered region spans residues 19–39 (MLEDKQKQKRHQSAGSVRTTS).

It belongs to the TUB family. Interacts with rgb-3. In terms of tissue distribution, expressed in ciliated sensory neurons.

It is found in the cytoplasm. Its subcellular location is the cell projection. It localises to the axon. The protein resides in the dendrite. The protein localises to the cilium. Functionally, has a role in fat regulation independent of daf-16. Implicated in ciliar sensory function which is required for normal sensory behavior such as chemotaxis. Required for extension and growth of sensory neuronal cilia during postembryonic development, potentially via mediating signaling protein transport and localization of PI(4,5)P2 to the ciliary base. Functions in life span control via the insulin/IGF-1 pathway. Thought to be involved in neuronal trafficking. The sequence is that of Tubby protein homolog 1 from Caenorhabditis elegans.